A 434-amino-acid polypeptide reads, in one-letter code: GTPase Obg (434 aa).

Residues 1–158 (MFLDTAKIKV…RELQLELKIL (158 aa)) form the Obg domain. Positions 159-336 (ADVGLVGFPS…LLDATAELLD (178 aa)) constitute an OBG-type G domain. GTP is bound by residues 165–172 (GFPSVGKS), 190–194 (FTTIV), 212–215 (DLPG), 282–285 (NKMD), and 317–319 (SGL). Mg(2+) contacts are provided by serine 172 and threonine 192. The OCT domain maps to 356-434 (GFDEEEKAFE…IGKFEFEFVD (79 aa)).

This sequence belongs to the TRAFAC class OBG-HflX-like GTPase superfamily. OBG GTPase family. In terms of assembly, monomer. The cofactor is Mg(2+).

The protein localises to the cytoplasm. Its function is as follows. An essential GTPase which binds GTP, GDP and possibly (p)ppGpp with moderate affinity, with high nucleotide exchange rates and a fairly low GTP hydrolysis rate. Plays a role in control of the cell cycle, stress response, ribosome biogenesis and in those bacteria that undergo differentiation, in morphogenesis control. This Streptococcus pneumoniae serotype 19F (strain G54) protein is GTPase Obg.